Here is a 611-residue protein sequence, read N- to C-terminus: tRNA uridine 5-carboxymethylaminomethyl modification enzyme MnmG (611 aa).

G14–G19 contributes to the FAD binding site. Residue G274–F288 participates in NAD(+) binding.

Belongs to the MnmG family. As to quaternary structure, homodimer. Heterotetramer of two MnmE and two MnmG subunits. Requires FAD as cofactor.

The protein localises to the cytoplasm. NAD-binding protein involved in the addition of a carboxymethylaminomethyl (cmnm) group at the wobble position (U34) of certain tRNAs, forming tRNA-cmnm(5)s(2)U34. The chain is tRNA uridine 5-carboxymethylaminomethyl modification enzyme MnmG from Chlamydia abortus (strain DSM 27085 / S26/3) (Chlamydophila abortus).